A 497-amino-acid chain; its full sequence is Signal recognition particle subunit SRP54 2 (497 aa).

Residues 1-297 (MVLAELGGRI…DAKPFVSRLL (297 aa)) are G-domain. GTP contacts are provided by residues 108–117 (GLQGEVLEKP), 192–196 (DTSGR), and 250–253 (TKMD). The segment at 298-497 (GNGDMSGFVN…LMGMFGGRDE (200 aa)) is M-domain.

This sequence belongs to the GTP-binding SRP family. SRP54 subfamily. Component of a signal recognition particle (SRP) complex that consists of a 7SL RNA molecule of 300 nucleotides and six protein subunits: SRP72, SRP68, SRP54, SRP19, SRP14 and SRP9.

It localises to the cytoplasm. The protein localises to the endoplasmic reticulum. It catalyses the reaction GTP + H2O = GDP + phosphate + H(+). Component of the signal recognition particle (SRP) complex, a ribonucleoprotein complex that mediates the cotranslational targeting of secretory and membrane proteins to the endoplasmic reticulum (ER). As part of the SRP complex, associates with the SRP receptor (SR) component SRPRA to target secretory proteins to the endoplasmic reticulum membrane. Binds to the signal sequence of presecretory proteins when they emerge from the ribosomes. Displays basal GTPase activity, and stimulates reciprocal GTPase activation of the SR subunit SRPRA. Forms a guanosine 5'-triphosphate (GTP)-dependent complex with the SR subunit SRPRA. SR compaction and GTPase mediated rearrangement of SR drive SRP-mediated cotranslational protein translocation into the ER. Requires the presence of SRP9/SRP14 and/or SRP19 to stably interact with RNA. This chain is Signal recognition particle subunit SRP54 2 (SRP-54B), found in Arabidopsis thaliana (Mouse-ear cress).